Reading from the N-terminus, the 250-residue chain is Transcriptional activator protein EchR (250 aa).

The HTH luxR-type domain occupies 173-238 (KSQEPNIFSQ…HAIRLGVEMN (66 aa)). The segment at residues 197-216 (YQEIALILGITTSTVKFHIG) is a DNA-binding region (H-T-H motif).

The protein belongs to the autoinducer-regulated transcriptional regulatory protein family.

Its function is as follows. Functions as a potential ohlL-responsive transcriptional regulator. This chain is Transcriptional activator protein EchR (echR), found in Dickeya chrysanthemi (Pectobacterium chrysanthemi).